Here is a 306-residue protein sequence, read N- to C-terminus: tRNA dimethylallyltransferase (306 aa).

An ATP-binding site is contributed by 9-16; the sequence is GPTAVGKT. Residue 11 to 16 participates in substrate binding; the sequence is TAVGKT. Residues 34–37 form an interaction with substrate tRNA region; the sequence is DSRQ.

Belongs to the IPP transferase family. Monomer. Mg(2+) serves as cofactor.

The enzyme catalyses adenosine(37) in tRNA + dimethylallyl diphosphate = N(6)-dimethylallyladenosine(37) in tRNA + diphosphate. Its function is as follows. Catalyzes the transfer of a dimethylallyl group onto the adenine at position 37 in tRNAs that read codons beginning with uridine, leading to the formation of N6-(dimethylallyl)adenosine (i(6)A). The protein is tRNA dimethylallyltransferase of Roseiflexus castenholzii (strain DSM 13941 / HLO8).